A 647-amino-acid chain; its full sequence is DNA mismatch repair protein MutL (647 aa).

The protein belongs to the DNA mismatch repair MutL/HexB family.

Functionally, this protein is involved in the repair of mismatches in DNA. It is required for dam-dependent methyl-directed DNA mismatch repair. May act as a 'molecular matchmaker', a protein that promotes the formation of a stable complex between two or more DNA-binding proteins in an ATP-dependent manner without itself being part of a final effector complex. The chain is DNA mismatch repair protein MutL from Bacillus cereus (strain G9842).